A 128-amino-acid chain; its full sequence is Large ribosomal subunit protein bL20c (128 aa).

This sequence belongs to the bacterial ribosomal protein bL20 family.

The protein localises to the plastid. Its function is as follows. Binds directly to 23S ribosomal RNA and is necessary for the in vitro assembly process of the 50S ribosomal subunit. It is not involved in the protein synthesizing functions of that subunit. This is Large ribosomal subunit protein bL20c (rpl20) from Lathraea clandestina (Purple toothwort).